Reading from the N-terminus, the 171-residue chain is 3-hydroxydecanoyl-[acyl-carrier-protein] dehydratase (171 aa).

H70 is an active-site residue.

Belongs to the thioester dehydratase family. FabA subfamily. As to quaternary structure, homodimer.

The protein resides in the cytoplasm. It catalyses the reaction a (3R)-hydroxyacyl-[ACP] = a (2E)-enoyl-[ACP] + H2O. The enzyme catalyses (3R)-hydroxydecanoyl-[ACP] = (2E)-decenoyl-[ACP] + H2O. The catalysed reaction is (2E)-decenoyl-[ACP] = (3Z)-decenoyl-[ACP]. It participates in lipid metabolism; fatty acid biosynthesis. Functionally, necessary for the introduction of cis unsaturation into fatty acids. Catalyzes the dehydration of (3R)-3-hydroxydecanoyl-ACP to E-(2)-decenoyl-ACP and then its isomerization to Z-(3)-decenoyl-ACP. Can catalyze the dehydratase reaction for beta-hydroxyacyl-ACPs with saturated chain lengths up to 16:0, being most active on intermediate chain length. The sequence is that of 3-hydroxydecanoyl-[acyl-carrier-protein] dehydratase from Pseudomonas aeruginosa (strain LESB58).